The following is a 453-amino-acid chain: Aryl hydrocarbon receptor nuclear translocator homolog (453 aa).

The bHLH domain occupies 44–97; that stretch reads FARENHSEIERRRRNKMTHYINELAEMVPQCASLGRKPDKLTILRMAVSHMKGI. 2 PAS domains span residues 115 to 193 and 277 to 347; these read DQEL…LDLK and ASMP…LSDQ. The PAC domain maps to 348–392; the sequence is PMRINIRVRTSTDYIPCTVSAYKFMNPYSEQFEYVVATHQIAPQE. Residues 410 to 453 form a disordered region; that stretch reads EFGELGGAPSAVDYGQSSSGGWRPEAQGAPQAQWQWDPMNGYNQ.

Interacts with hif-1. Heterodimer; efficient DNA binding requires dimerization with another bHLH protein. Forms a heterodimer with ahr-1; binds DNA as heterodimer. Forms a heterodimer with PAS domain-containing protein cky-1; binds DNA as heterodimer. Expressed in many cell types throughout development, including hypodermal cells, intestinal cells, pharyngeal cells, and neurons. Expressed in every cell during embryo.

It is found in the nucleus. Its function is as follows. Transcription factor. Efficient DNA binding requires dimerization with another bHLH protein, such as cky-1 or ahr-1. Regulates transcription of target genes, probably acting in complex with cky-1. Has a role in cellular differentiation. Required for pharyngeal development. In collaboration with ahr-1 it is involved in RMEL/R and SDQR neuron cell migration. Acts in the cellular response to hypoxia. Involved in aggregation behavior by regulating soluble guanylate cyclase gene expression in the URX neurons. The protein is Aryl hydrocarbon receptor nuclear translocator homolog of Caenorhabditis elegans.